Consider the following 311-residue polypeptide: Serpentine receptor class gamma-6 (311 aa).

7 helical membrane-spanning segments follow: residues 24 to 44 (MGQL…IYVI), 58 to 78 (FWLL…FDIF), 101 to 121 (PLLI…KMVA), 148 to 168 (LTAC…NILI), 200 to 220 (YMQI…AILW), 235 to 255 (IWFA…YLHM), and 266 to 286 (IFML…VIMI).

The protein belongs to the nematode receptor-like protein srg family.

The protein resides in the membrane. This Caenorhabditis elegans protein is Serpentine receptor class gamma-6 (srg-6).